The primary structure comprises 140 residues: Small ribosomal subunit protein uS19 (140 aa).

Residues 120-140 (RPKHSAPGIGATRSSAHVSKK) form a disordered region. Over residues 131 to 140 (TRSSAHVSKK) the composition is skewed to polar residues.

It belongs to the universal ribosomal protein uS19 family.

Protein S19 forms a complex with S13 that binds strongly to the 16S ribosomal RNA. The protein is Small ribosomal subunit protein uS19 of Nanoarchaeum equitans (strain Kin4-M).